Here is a 386-residue protein sequence, read N- to C-terminus: Cystathionine gamma-synthase (386 aa).

Lys198 is subject to N6-(pyridoxal phosphate)lysine.

This sequence belongs to the trans-sulfuration enzymes family. Homotetramer. The cofactor is pyridoxal 5'-phosphate.

Its subcellular location is the cytoplasm. The catalysed reaction is O-succinyl-L-homoserine + L-cysteine = L,L-cystathionine + succinate + H(+). Its pathway is amino-acid biosynthesis; L-methionine biosynthesis via de novo pathway; L-cystathionine from O-succinyl-L-homoserine: step 1/1. Catalyzes the formation of L-cystathionine from O-succinyl-L-homoserine (OSHS) and L-cysteine, via a gamma-replacement reaction. In the absence of thiol, catalyzes gamma-elimination to form 2-oxobutanoate, succinate and ammonia. This is Cystathionine gamma-synthase (metB) from Escherichia coli (strain K12).